The following is a 195-amino-acid chain: uncharacterized protein (195 aa).

A signal peptide spans 1 to 21; the sequence is MHFSSCVLVSALAIVTNVATA. 2 N-linked (GlcNAc...) asparagine glycosylation sites follow: Asn-62 and Asn-109. The segment at 119 to 141 is disordered; the sequence is DWDEDTVTGENAPDSGEPFSTSH.

It is found in the secreted. This is an uncharacterized protein from Arthroderma benhamiae (strain ATCC MYA-4681 / CBS 112371) (Trichophyton mentagrophytes).